Consider the following 196-residue polypeptide: Proteasome subunit beta 1 (196 aa).

The propeptide at Met-1–Ala-6 is removed in mature form; by autocatalysis. Thr-7 (nucleophile) is an active-site residue.

Belongs to the peptidase T1B family. In terms of assembly, the 20S proteasome core is composed of 14 alpha and 14 beta subunits that assemble into four stacked heptameric rings, resulting in a barrel-shaped structure. The two inner rings, each composed of seven catalytic beta subunits, are sandwiched by two outer rings, each composed of seven alpha subunits. The catalytic chamber with the active sites is on the inside of the barrel. Has a gated structure, the ends of the cylinder being occluded by the N-termini of the alpha-subunits. Is capped at one or both ends by the proteasome regulatory ATPase, PAN.

It is found in the cytoplasm. The enzyme catalyses Cleavage of peptide bonds with very broad specificity.. Its activity is regulated as follows. The formation of the proteasomal ATPase PAN-20S proteasome complex, via the docking of the C-termini of PAN into the intersubunit pockets in the alpha-rings, triggers opening of the gate for substrate entry. Interconversion between the open-gate and close-gate conformations leads to a dynamic regulation of the 20S proteasome proteolysis activity. Its function is as follows. Component of the proteasome core, a large protease complex with broad specificity involved in protein degradation. This Saccharolobus solfataricus (strain ATCC 35092 / DSM 1617 / JCM 11322 / P2) (Sulfolobus solfataricus) protein is Proteasome subunit beta 1.